Consider the following 359-residue polypeptide: Protein RecA (359 aa).

77-84 (GPESSGKT) contributes to the ATP binding site.

It belongs to the RecA family.

It is found in the cytoplasm. Functionally, can catalyze the hydrolysis of ATP in the presence of single-stranded DNA, the ATP-dependent uptake of single-stranded DNA by duplex DNA, and the ATP-dependent hybridization of homologous single-stranded DNAs. It interacts with LexA causing its activation and leading to its autocatalytic cleavage. The chain is Protein RecA from Paramagnetospirillum magneticum (strain ATCC 700264 / AMB-1) (Magnetospirillum magneticum).